Consider the following 179-residue polypeptide: Large ribosomal subunit protein bL19 (179 aa).

This sequence belongs to the bacterial ribosomal protein bL19 family.

Its function is as follows. This protein is located at the 30S-50S ribosomal subunit interface and may play a role in the structure and function of the aminoacyl-tRNA binding site. The polypeptide is Large ribosomal subunit protein bL19 (Rhizobium johnstonii (strain DSM 114642 / LMG 32736 / 3841) (Rhizobium leguminosarum bv. viciae)).